Consider the following 375-residue polypeptide: MGASAATGMQMVAARPCISASQGMLTSRAAVSRIGRALSTTTGFATCPRICYSSPLGSSKRSGVAIRAMSSESGPQGLPIDLRGKRAFIAGVADDNGYGWAIAKALAAAGAEILVGTWVPALNIFETSLRRGKFDESRKLPDGSLMEIVKVYPLDAVYDSPEDVPEDVKGNKRYAGSSNWTVKEVAESVKNDFGSIDILVHSLANGPEVTKPLLETSRRGYLAALSASSYSFVSLLQHFLPIMNPGGASISLTYIASERAIPGYGGGMSSAKAALESDTKVLAFEAGRKGKIRVNTISAGPLGSRAAKAIGFIEKMIEYSYVNAPLQKELLADEVGNTAAFLVSPLASAITGSTVYVDNGLNTMGLAVDSPTISS.

Residues 1-67 (MGASAATGMQ…SSKRSGVAIR (67 aa)) constitute a chloroplast transit peptide. Residues Gly91, Tyr98, 155–156 (DA), 202–203 (SL), and Leu252 each bind NAD(+). Catalysis depends on proton acceptor residues Tyr254 and Tyr264. NAD(+) contacts are provided by residues Lys272 and 302–306 (LGSRA).

This sequence belongs to the short-chain dehydrogenases/reductases (SDR) family. FabI subfamily. In terms of assembly, homotetramer.

The protein resides in the plastid. The protein localises to the chloroplast. It catalyses the reaction a 2,3-saturated acyl-[ACP] + NAD(+) = a (2E)-enoyl-[ACP] + NADH + H(+). Its pathway is lipid metabolism; fatty acid biosynthesis. Its function is as follows. Catalyzes the NAD-dependent reduction of a carbon-carbon double bond in an enoyl moiety that is covalently linked to an acyl carrier protein (ACP). Catalyzes the last reduction step in the de novo synthesis cycle of fatty acids. Involved in the elongation cycle of fatty acids which are used in lipid metabolism. Required for normal plant growth. This is Enoyl-[acyl-carrier-protein] reductase [NADH] 1, chloroplastic from Oryza sativa subsp. japonica (Rice).